Reading from the N-terminus, the 236-residue chain is Rho-related GTP-binding protein RhoV (236 aa).

The segment at 1-27 (MPPRELSEAEPPPLPASTPPPRRRSAP) is disordered. The span at 10–20 (EPPPLPASTPP) shows a compositional bias: pro residues. At Ser-25 the chain carries Phosphoserine. Residues 38 to 45 (GDGAVGKS), 85 to 89 (DTAGQ), and 143 to 146 (TQAD) each bind GTP. The S-palmitoyl cysteine moiety is linked to residue Cys-234.

The protein belongs to the small GTPase superfamily. Rho family. As to quaternary structure, interacts with PAK2. The cofactor is Mg(2+).

The protein localises to the cell membrane. It is found in the endosome membrane. In terms of biological role, plays a role in the control of the actin cytoskeleton via activation of the JNK pathway. The polypeptide is Rho-related GTP-binding protein RhoV (Mus musculus (Mouse)).